We begin with the raw amino-acid sequence, 184 residues long: Translation initiation factor IF-3 (184 aa).

This sequence belongs to the IF-3 family. Monomer.

It localises to the cytoplasm. In terms of biological role, IF-3 binds to the 30S ribosomal subunit and shifts the equilibrium between 70S ribosomes and their 50S and 30S subunits in favor of the free subunits, thus enhancing the availability of 30S subunits on which protein synthesis initiation begins. The polypeptide is Translation initiation factor IF-3 (Mycoplasma genitalium (strain ATCC 33530 / DSM 19775 / NCTC 10195 / G37) (Mycoplasmoides genitalium)).